A 566-amino-acid polypeptide reads, in one-letter code: Endoglucanase G (566 aa).

Residues 1–30 (MKKAKAIFSLVVALMVLAIFCFAQNTGSTA) form the signal peptide. The active-site Proton donor is the E226. Catalysis depends on E381, which acts as the Nucleophile. A disordered region spans residues 473 to 494 (GTPQASDPPATPTATPTKPAAS). Low complexity predominate over residues 474–494 (TPQASDPPATPTATPTKPAAS). The Dockerin domain occupies 497–564 (PSFIYGDINS…LLRSIDKLPH (68 aa)).

This sequence belongs to the glycosyl hydrolase 5 (cellulase A) family.

The enzyme catalyses Endohydrolysis of (1-&gt;4)-beta-D-glucosidic linkages in cellulose, lichenin and cereal beta-D-glucans.. This enzyme catalyzes the endohydrolysis of 1,4-beta-glucosidic linkages in cellulose, lichenin and cereal beta-D-glucans. The sequence is that of Endoglucanase G (celG) from Acetivibrio thermocellus (strain ATCC 27405 / DSM 1237 / JCM 9322 / NBRC 103400 / NCIMB 10682 / NRRL B-4536 / VPI 7372) (Clostridium thermocellum).